The sequence spans 136 residues: NLP effector protein 13 (136 aa).

Residues 1-9 carry the Conserved undecapeptide motif I motif; sequence MYSWYFPKD. The short motif at 16 to 22 is the Hepta-peptide GHRHDWE motif II element; it reads GHRHDWE.

The protein belongs to the Necrosis inducing protein (NPP1) family.

It is found in the secreted. Secreted effector that contributes moderately to virulence during infection by P.capsici. Causes only small yellow areas at 3 days after inoculation of host C.annuum leaves; these areas expand somewhat and became necrotic at 7 days after inoculation. Leads only to chlorotic areas, without necrosis at 7 days after non-host N.benthamiana leaves infection. The polypeptide is NLP effector protein 13 (Phytophthora capsici).